A 251-amino-acid polypeptide reads, in one-letter code: HTH-type transcriptional regulator UlaR (251 aa).

Positions 3–58 (EAQRHQILLEMLAQLGFVTVEKVVERLGISPATARRDINKLDESGKLKKVRNGAEA) constitute an HTH deoR-type domain. The H-T-H motif DNA-binding region spans 20–39 (VTVEKVVERLGISPATARRD).

It is found in the cytoplasm. Its function is as follows. Represses ulaG and the ulaABCDEF operon. This Shigella dysenteriae serotype 1 (strain Sd197) protein is HTH-type transcriptional regulator UlaR.